Consider the following 310-residue polypeptide: p-hydroxybenzoic acid efflux pump subunit AaeA (310 aa).

A helical transmembrane segment spans residues 12-32 (AITVVLVILAFIAIFNAWVYY).

Belongs to the membrane fusion protein (MFP) (TC 8.A.1) family.

It is found in the cell inner membrane. Functionally, forms an efflux pump with AaeB. In Escherichia coli O127:H6 (strain E2348/69 / EPEC), this protein is p-hydroxybenzoic acid efflux pump subunit AaeA.